The sequence spans 506 residues: Epstein-Barr nuclear antigen leader protein (506 aa).

Disordered stretches follow at residues 1-470 and 485-506; these read MGDR…PRPP and FEPP…EDED. Phosphoserine; by host is present on Ser35.

The protein belongs to the lymphocryptovirus EBNA-LP family. As to quaternary structure, homooligomer. Interacts with host SP100; this interaction is important for EBNA-LP coactivator activity. Interacts with host HAX1, ERR1 and HSPA2. Interacts with host PRKDC and AKAP8L; these interactions modulate the coactivator function of EBNA-LP. In terms of processing, phosphorylated by the cellular protein kinase cdc2.

It is found in the host nucleus. Its function is as follows. Plays an important role in the establishment of B-cell immortalization by acting as an EBNA2 coactivator. This transcriptional activation preferentially enhances the expression of the major viral protein LMP1. The interaction between EBNA-LP and host SP100 correlates with coactivation of EBNA2 and the relocalization of SP100 from PML nuclear bodies into nucleoplasm. The protein is Epstein-Barr nuclear antigen leader protein (EBNA-LP) of Epstein-Barr virus (strain B95-8) (HHV-4).